We begin with the raw amino-acid sequence, 349 residues long: Terpene cyclase rstn5 (349 aa).

5 helical membrane passes run 4-24 (LTPL…WGVF), 81-101 (FMVQ…TEGA), 116-136 (GLFS…FWFV), 158-178 (VVPS…FDPF), and 181-201 (GLDL…CISL). N-linked (GlcNAc...) asparagine glycosylation is present at Asn-222. Helical transmembrane passes span 228–248 (VAVG…GLTG), 271–291 (LVLL…LLLA), and 309–329 (TLAV…AWAL).

This sequence belongs to the membrane-bound ascI terpene cyclase family.

The protein localises to the membrane. It functions in the pathway antifungal biosynthesis. Cyclase; part of the gene cluster that mediates the biosynthesis of the tetrahydropyranyl antifungal agent restricticin that acts as an inhibitor of CYP51 and blocks the ergosterol biosynthesis. The highly reducing polyketide synthase rstn3, the short chain dehydrogenase rstn4, the cyclase rstn5, the FAD-dependent monooxygenase rstn6 and the enoylreductase rstn7 are required to generate the first stable intermediate desmethylrestrictinol. Rstn3 with rstn7 biosynthesize the first polyketide chain intermediate that is reduced by rstn4, followed by epoxidation by rstn6 before 6-endo cyclization via epoxide opening by rstn5 leads to desmethylrestrictinol. The methyltransferase rstn1 then catalyzes the C4 O-methylation of desmethylrestrictinol to produce restrictinol, and the nonribosomal peptide synthetase rstn8 catalyzes the C3 esterification of restrictinol with glycine that leads to restricticin. In Aspergillus nomiae NRRL (strain ATCC 15546 / NRRL 13137 / CBS 260.88 / M93), this protein is Terpene cyclase rstn5.